A 102-amino-acid polypeptide reads, in one-letter code: Putative defensin-like protein 152 (102 aa).

The signal sequence occupies residues 1-29 (MKKASQLSTTILTIFIVLAIGMMVKGTVG). Disulfide bonds link Cys-34–Cys-93, Cys-51–Cys-71, Cys-56–Cys-87, and Cys-60–Cys-89.

Belongs to the DEFL family.

Its subcellular location is the secreted. This is Putative defensin-like protein 152 (LCR11) from Arabidopsis thaliana (Mouse-ear cress).